The chain runs to 619 residues: MLRKTLTLISLRRPFSSIPSKTLTPHQKSSFESTLHHSLITHDTDQAWKVFRSFAAASSLPDKRLLNSLITHLSSFHNTDQNTSLRHRLKRAFVSTTYVIEKDPILLEFETVRTVLESMKLAKASGPALALVECMFKNRYFVPFDLWGDLLIDVCRENGSLAAFLKVFRESCRIAVDEKLDFMKPDLVASNAALEACCRQMESLADAENLIESMDVLGVKPDELSFGFLAYLYARKGLREKISELEDLMDGLGFASRRILYSSMISGYVKSGDLDSASDVILCSLKGVGEASSFSEETYCELVRGFIESKSVESLAKLIIEAQKLESMSTDVGGSVGFGIVNACVKLGFSGKSILDELNAQGGSGGIGVYVPILKAYCKEGRTSEATQLVTEISSSGLQLDVETYNTMIEASMTKHDFLSALTLFRDMRETRVADLKRCYLTIMTGLLENQRPELMAEFVEEVMEDPRVEVKSHDWNSIIHAFCKSGRLGDAKSTFRRMTFLQYEPNNQTYLSLINGYVSCEKYFEVVVIWKEFKDKKAKLEHALADAFLNALVKGGFFGTALQVIEKCQEMKIFVDKWRYKATFMETQKNLRLPKLRKRKMKKIEFLDAFKNWARITT.

The N-terminal 100 residues, 1-100, are a transit peptide targeting the mitochondrion; that stretch reads MLRKTLTLIS…RAFVSTTYVI (100 aa). 10 PPR repeats span residues 186–221, 222–256, 257–292, 295–329, 366–400, 401–435, 436–466, 472–506, 507–541, and 542–576; these read DLVASNAALEACCRQMESLADAENLIESMDVLGVKP, DELSFGFLAYLYARKGLREKISELEDLMDGLGFAS, RRILYSSMISGYVKSGDLDSASDVILCSLKGVGEAS, SEETYCELVRGFIESKSVESLAKLIIEAQKLESMS, GIGVYVPILKAYCKEGRTSEATQLVTEISSSGLQL, DVETYNTMIEASMTKHDFLSALTLFRDMRETRVAD, LKRCYLTIMTGLLENQRPELMAEFVEEVMED, KSHDWNSIIHAFCKSGRLGDAKSTFRRMTFLQYEP, NNQTYLSLINGYVSCEKYFEVVVIWKEFKDKKAKL, and EHALADAFLNALVKGGFFGTALQVIEKCQEMKIFV.

This sequence belongs to the PPR family. P subfamily.

Its subcellular location is the mitochondrion. The chain is Pentatricopeptide repeat-containing protein At1g68980, mitochondrial from Arabidopsis thaliana (Mouse-ear cress).